Consider the following 190-residue polypeptide: Potassium-transporting ATPase KdpC subunit (190 aa).

A helical membrane pass occupies residues 7 to 27; it reads PALLMLLVWTLITGVFYPVLV.

This sequence belongs to the KdpC family. In terms of assembly, the system is composed of three essential subunits: KdpA, KdpB and KdpC.

Its subcellular location is the cell inner membrane. Its function is as follows. Part of the high-affinity ATP-driven potassium transport (or Kdp) system, which catalyzes the hydrolysis of ATP coupled with the electrogenic transport of potassium into the cytoplasm. This subunit acts as a catalytic chaperone that increases the ATP-binding affinity of the ATP-hydrolyzing subunit KdpB by the formation of a transient KdpB/KdpC/ATP ternary complex. The sequence is that of Potassium-transporting ATPase KdpC subunit from Methylococcus capsulatus (strain ATCC 33009 / NCIMB 11132 / Bath).